The sequence spans 674 residues: MTIRHQGQQYRPRMAFLQKIEALVKDMQNPETGVRMQNQRVLVTSVPHAMTGSDVLQWIVQRLWISSLEAQNLGNFIVRYGYIYPLQDPKNLILKPDGSLYRFQTPYFWPTQQWPAEDTDYAIYLAKRNIKKKGILEEYEKENYNFLNQKMNYKWDFVIMQAKEQYRAGKERNKADRYALDCQEKAYWLVHRCPPGMDNVLDYGLDRVTNPNEVKVNQKQTVVAVKKEIMYYQQALMRSTVKSSVSLGGIVKYSEQFSSNDAIMSGCLPSNPWITDDTQFWDLNAKLVEIPTKMRVERWAFNFSELIRDPKGRQSFQYFLKKEFSGENLGFWEACEDLKYGDQSKVKEKAEEIYKLFLAPGARRWINIDGKTMDITVKGLKHPHRYVLDAAQTHIYMLMKKDSYARYLKSPIYKDMLAKAIEPQETTKKSSTLPFMRRHLRSSPSPVILRQLEEEAKAREAANTVDITQPGQHMAPSPHLTVYTGTCMPPSPSSPFSSSCRSPRKPFASPSRFIRRPSTTICPSPIRVALESSSGLEQKGECSGSMAPRGPSVTESSEASLDTSWPRSRPRAPPKARMALSFSRFLRRGCLASPVFARLSPKCPAVSHGRVQPLGDVGQQLPRLKSKRVANFFQIKMDVPTGSGTCLMDSEDAGTGESGDRATEKEVICPWESL.

A DEP domain is found at 30-105; it reads PETGVRMQNQ…PDGSLYRFQT (76 aa). The 62-residue stretch at 219 to 280 folds into the G protein gamma domain; it reads KQTVVAVKKE…NPWITDDTQF (62 aa). The RGS domain occupies 298–413; it reads RWAFNFSELI…YARYLKSPIY (116 aa). Residues 533-573 are disordered; the sequence is SSGLEQKGECSGSMAPRGPSVTESSEASLDTSWPRSRPRAP. The span at 553–565 shows a compositional bias: polar residues; sequence VTESSEASLDTSW.

Heterodimer with GNB5. Interacts with RGS7BP, leading to regulate the subcellular location of the heterodimer formed with GNB5. Component of the RGS9-1-Gbeta5 complex composed of RGS9 (RGS9-1), Gbeta5 (GNB5) and RGS9BP. Interacts with PDE6G and GNAT1. Post-translationally, retinal isoform 3 is light-dependent phosphorylated at 'Ser-478'. Phosphorylation is decreased by light exposition. Highly expressed in the caudate and putamen, lower levels found in the hypothalamus and nucleus accumbens and very low levels in cerebellum. Not expressed in globus pallidus or cingulate cortex. Isoform 2 is expressed predominantly in pineal gland and retina. Isoform 3 is expressed in retina (abundant in photoreceptors).

The protein resides in the membrane. Inhibits signal transduction by increasing the GTPase activity of G protein alpha subunits thereby driving them into their inactive GDP-bound form. Binds to GNAT1. Involved in phototransduction; key element in the recovery phase of visual transduction. This is Regulator of G-protein signaling 9 (RGS9) from Homo sapiens (Human).